The following is a 570-amino-acid chain: ATP-dependent RNA helicase ROK1 (570 aa).

Residues 69–78 (ETHAEDKEDK) are compositionally biased toward basic and acidic residues. Positions 69–96 (ETHAEDKEDKDNDNEEDEIKEEESLQYQ) are disordered. Over residues 79-89 (DNDNEEDEIKE) the composition is skewed to acidic residues. A Q motif motif is present at residues 131 to 159 (DLITRFSFDKRLLNNLILNHFTEPTPIQC). Residues 162–342 (IPLALNNRDM…KSIMMDPVRV (181 aa)) form the Helicase ATP-binding domain. Residue 175–182 (APTGSGKT) coordinates ATP. The short motif at 289–292 (DEAD) is the DEAD box element. In terms of domain architecture, Helicase C-terminal spans 353–515 (SIEQKLVFCG…EISEWMEKVS (163 aa)).

This sequence belongs to the DEAD box helicase family. DDX52/ROK1 subfamily. Interacts with the U3 snoRNA and is associated with the 90S and 40S pre-ribosomes.

The protein localises to the nucleus. The protein resides in the nucleolus. It carries out the reaction ATP + H2O = ADP + phosphate + H(+). In terms of biological role, ATP-dependent RNA helicase involved in 40S ribosomal subunit biogenesis. Required for the processing and cleavage of 35S pre-rRNA at sites A0, A1, and A2, leading to mature 18S rRNA. The polypeptide is ATP-dependent RNA helicase ROK1 (ROK1) (Vanderwaltozyma polyspora (strain ATCC 22028 / DSM 70294 / BCRC 21397 / CBS 2163 / NBRC 10782 / NRRL Y-8283 / UCD 57-17) (Kluyveromyces polysporus)).